The sequence spans 408 residues: 5-hydroxytryptamine receptor 1A (408 aa).

Residues 1 to 32 (MDASNNTTSWNILQRGRMGPSWRRCPVSYQII) lie on the Extracellular side of the membrane. Asn-5 and Asn-6 each carry an N-linked (GlcNAc...) asparagine glycan. Residues 33–53 (ASLFLGRSFSAGIFGNACVIA) traverse the membrane as a helical segment. The Cytoplasmic segment spans residues 54 to 67 (AIALERSLQNVANY). Residues 68 to 92 (LIGSLAVTDLMVSVLVLPMAAQNQV) traverse the membrane as a helical segment. The Extracellular portion of the chain corresponds to 93 to 101 (LNKWTLGQV). The chain crosses the membrane as a helical span at residues 102-126 (TCDIFISLDVLCCTSSILHLCAIAL). Cysteines 103 and 181 form a disulfide. Serotonin is bound by residues Asp-110 and Cys-114. Positions 127-129 (DRY) match the DRY motif; important for ligand-induced conformation changes motif. Over 127–146 (DRYWAITDPIDYVNKRTPRR) the chain is Cytoplasmic. A helical membrane pass occupies residues 147–168 (AAVLISITWIVGFSISIPPMLG). Residues 169-187 (WRTPEDRSDPNACRISEDP) lie on the Extracellular side of the membrane. A helical membrane pass occupies residues 188–210 (GYTIYSTFGAFYIPLILMLVLYG). Residues 211-333 (KIFKAARFRI…LARERKTVKT (123 aa)) lie on the Cytoplasmic side of the membrane. Positions 235-255 (TCLSVSQQSPKEKQRGAQQEL) are disordered. Lys-332, Thr-333, and Gly-339 together coordinate 1D-myo-inositol 4-phosphate. Residues 334–357 (LGIIMGTFILCWLPFFIVALVLPF) form a helical membrane-spanning segment. Topologically, residues 358–364 (CETCHMP) are extracellular. The chain crosses the membrane as a helical span at residues 365-389 (HLLFDIITWLGYSNSLLNPIIYAYF). The NPxxY motif; important for ligand-induced conformation changes and signaling signature appears at 382 to 386 (NPIIY). 1D-myo-inositol 4-phosphate contacts are provided by Phe-389, Asn-390, and Lys-391. At 390–408 (NKDFQSAFKKIIKCKFCRQ) the chain is on the cytoplasmic side.

It belongs to the G-protein coupled receptor 1 family. 5-hydroxytryptamine receptor subfamily. HTR1A sub-subfamily. First expressed in the rostral part of the brain stem at stage 22. At later stages of development, expression is localized to serotonergic neurons. The expression pattern changes in the tadpole of stage 41 where, in addition to serotonergic neurons, expression is also localized to the inner nuclear layer (INL) of the developing retina. This expression pattern continues through to the start of metamorphosis (stage 46). In adults, expressed in the brain, in particular the telencephalon, diencephalon and mesencephalon. In the telencephalic region, expression is localized to the lateral, dorsal and medial pallium, and in the striatum, septum and amygdala. In the mesencephalic region, expression is strongest in the optic tectum and torus semicircularis with moderate levels of expression in tegmental nuclei. In diencephalon, localized to the dorsal and ventral thalamus and the preoptic area of the hypothalamus.

The protein localises to the cell membrane. G-protein coupled receptor activity is regulated by lipids: phosphatidylinositol 4-phosphate increases HTR1A-mediated activity. In terms of biological role, G-protein coupled receptor for 5-hydroxytryptamine (serotonin). Also functions as a receptor for various drugs and psychoactive substances. Ligand binding causes a conformation change that triggers signaling via guanine nucleotide-binding proteins (G proteins) and modulates the activity of downstream effectors, such as adenylate cyclase. HTR1A is coupled to G(i)/G(o) G alpha proteins and mediates inhibitory neurotransmission: signaling inhibits adenylate cyclase activity and activates a phosphatidylinositol-calcium second messenger system that regulates the release of Ca(2+) ions from intracellular stores. Beta-arrestin family members regulate signaling by mediating both receptor desensitization and resensitization processes. Activation of the receptor may play a role in the exit from G0 phase and in promoting DNA synthesis. The chain is 5-hydroxytryptamine receptor 1A from Xenopus laevis (African clawed frog).